We begin with the raw amino-acid sequence, 161 residues long: MNPVISITLLLSVLQMSRGQRVISLTACLVNQNLRLDCRHENNTNLPIQHEFSLTREKKKHVLSGTLGVPEHTYRSRVNLFSDRFIKVLTLANFTTKDEGDYMCELRVSGQNPTSSNKTINVIRDKLVKCGGISLLVQNTSWLLLLLLSLSFLQATDFISL.

The signal sequence occupies residues 1–19 (MNPVISITLLLSVLQMSRG). At Gln-20 the chain carries Pyrrolidone carboxylic acid. Residues 20–126 (QRVISLTACL…NKTINVIRDK (107 aa)) form the Ig-like V-type domain. 2 cysteine pairs are disulfide-bonded: Cys-28-Cys-130 and Cys-38-Cys-104. The N-linked (GlcNAc...) (complex) asparagine; alternate glycan is linked to Asn-42. N-linked (GlcNAc...) (high mannose) asparagine; alternate glycosylation is present at Asn-42. Asn-42 carries N-linked (GlcNAc...) asparagine; alternate glycosylation. Ser-82 is subject to Phosphoserine. N-linked (GlcNAc...) (complex) asparagine; alternate glycosylation occurs at Asn-93. A glycan (N-linked (GlcNAc...) asparagine; alternate) is linked at Asn-93. The N-linked (GlcNAc...) (high mannose) asparagine; in brain; alternate glycan is linked to Asn-117. N-linked (GlcNAc...) (hybrid) asparagine; in brain; alternate glycosylation occurs at Asn-117. Residue Cys-130 is the site of GPI-anchor amidated cysteine attachment. Residues 131–161 (GGISLLVQNTSWLLLLLLSLSFLQATDFISL) constitute a propeptide, removed in mature form.

Post-translationally, glycosylation is tissue specific. Sialylation of N-glycans at Asn-93 in brain and at Asn-42, Asn-93 and Asn-117 in thymus. In terms of tissue distribution, abundant in lymphoid tissues.

It is found in the cell membrane. Functionally, may play a role in cell-cell or cell-ligand interactions during synaptogenesis and other events in the brain. The chain is Thy-1 membrane glycoprotein (Thy1) from Rattus norvegicus (Rat).